The primary structure comprises 312 residues: Olfactory receptor 6C68 (312 aa).

Residues 1–23 (MRKHTAITTFILLGLTEDPQLQV) lie on the Extracellular side of the membrane. A helical membrane pass occupies residues 24 to 44 (LLFMFLFITYMLSVTGKLTII). Residues 45-55 (ALTMLDPHLKT) are Cytoplasmic-facing. Residues 56-76 (PMYFFLQNLSFLEISFTATCV) traverse the membrane as a helical segment. The Extracellular portion of the chain corresponds to 77–95 (PRFLYSISTGNKIITYNAC). Cysteines 95 and 177 form a disulfide. The chain crosses the membrane as a helical span at residues 96-116 (VIQLFFADLFGVTEFFLLATM). At 117–143 (SYDRYVAICKPLHYMAIMSNKVCKTMV) the chain is on the cytoplasmic side. The helical transmembrane segment at 144–164 (ICCWMAALMIILPPLSLGFHL) threads the bilayer. The Extracellular segment spans residues 165-197 (EFCDSNVINHFGCDALPILKIPCSDTSLIEQMV). Residues 198–218 (VASAVLTFIITLVCVVLSYTY) traverse the membrane as a helical segment. Residues 219 to 239 (IIRTILKFPSVQQKKKAFSTC) lie on the Cytoplasmic side of the membrane. The chain crosses the membrane as a helical span at residues 240 to 260 (SSHITVVSITYGSCIFIYIKP). Residues 261–271 (SAKEEVNINKG) lie on the Extracellular side of the membrane. The helical transmembrane segment at 272–292 (VSVLISSISPMLNSFIYTLRN) threads the bilayer. Over 293–312 (EQVKQAFHDSLKKIAFRLKK) the chain is Cytoplasmic.

Belongs to the G-protein coupled receptor 1 family.

It is found in the cell membrane. Its function is as follows. Odorant receptor. In Homo sapiens (Human), this protein is Olfactory receptor 6C68 (OR6C68).